The following is an 810-amino-acid chain: MANFINMYRQLLSLPLSALVKNNPIPANPIEELSLNIHQPIVYVLPYTSQTDFVIFRRNCLALGLPDPAEKNEINGVKLPRYVYLDEGRRIFKSKGAKDETTTIFNKYLELHRTSESLDVQLIPVSVLWGRSPGQEDKSDLPNLRLLNGIQKTFAAIWFGRDTFVRFSQAVSLRYMVVEHGSDEKIAQKLARVAKMHFAKQRISATGPRLPNRQAMFNKLLQSEAIRRAIEDEAKSKNISIEKAQKEAYKILDEIAADVSHSSLRAVDRFLRWLWNKLYSGIDVQNSNRVRKLALEGHEIVYVPCHRSHIDYLLLSYVLYHQGLVPPHIAAGINLNFWPIGRMFRSWGAFFIRRTFKGNRLYSAIFREYLSELFHRGYSVEYFIEGGRSRTGRLLAPKTGMMSMTLQALQHSQTRPISIVPVYVGYEHVLEVDTYAKELRGAAKEKENAGLVLRVIKKLRNLGQGFVNFGEPITLSNYLSQHFPDWKEQNHEEKPQWFTPAVNNISKQVMININKAAAVNSMNLVGTALLSSRQRALSREQLLEQLSSYQQLLQNVPYSTDVVLPNVTPQAMLEHVLALDRIGVLIEKDNFGEIVRLERSSAVLMTYYRNNIQHLFVLPSLVASIILHYEAIQKDLLLDAIRKIYPFLQGELFLHFNEDELNVQIHQIINEFARQSVINSNDNFLSINKSKVRILQLWSAGTREILQRYYITVTILQKQPAISRAELEKESQLVAQRLSVLHGINAPEFFDKAVFSSFIANLKEQRYFDESGYTVLDKIEELASTLSHLISTEICLTVKGTIEKSEDLSS.

Positions 305–310 match the HXXXXD motif motif; it reads CHRSHI.

Belongs to the GPAT/DAPAT family.

The protein resides in the cell inner membrane. It catalyses the reaction sn-glycerol 3-phosphate + an acyl-CoA = a 1-acyl-sn-glycero-3-phosphate + CoA. It participates in phospholipid metabolism; CDP-diacylglycerol biosynthesis; CDP-diacylglycerol from sn-glycerol 3-phosphate: step 1/3. The protein is Glycerol-3-phosphate acyltransferase of Haemophilus influenzae (strain 86-028NP).